The following is a 91-amino-acid chain: Acylphosphatase (91 aa).

One can recognise an Acylphosphatase-like domain in the interval 3–91 (CLKAVVKGKV…GNYGDFHIKY (89 aa)). Active-site residues include R18 and N36.

The protein belongs to the acylphosphatase family.

It carries out the reaction an acyl phosphate + H2O = a carboxylate + phosphate + H(+). The polypeptide is Acylphosphatase (acyP) (Dehalococcoides mccartyi (strain ATCC BAA-2266 / KCTC 15142 / 195) (Dehalococcoides ethenogenes (strain 195))).